Here is a 332-residue protein sequence, read N- to C-terminus: Chorismate synthase (332 aa).

Arg-46 provides a ligand contact to NADP(+). FMN contacts are provided by residues His-123–Ser-125, Gly-253, Lys-268–Ser-272, and Arg-295.

The protein belongs to the chorismate synthase family. In terms of assembly, homotetramer. Requires FMNH2 as cofactor.

The enzyme catalyses 5-O-(1-carboxyvinyl)-3-phosphoshikimate = chorismate + phosphate. It participates in metabolic intermediate biosynthesis; chorismate biosynthesis; chorismate from D-erythrose 4-phosphate and phosphoenolpyruvate: step 7/7. In terms of biological role, catalyzes the anti-1,4-elimination of the C-3 phosphate and the C-6 proR hydrogen from 5-enolpyruvylshikimate-3-phosphate (EPSP) to yield chorismate, which is the branch point compound that serves as the starting substrate for the three terminal pathways of aromatic amino acid biosynthesis. This reaction introduces a second double bond into the aromatic ring system. This chain is Chorismate synthase, found in Chitinophaga pinensis (strain ATCC 43595 / DSM 2588 / LMG 13176 / NBRC 15968 / NCIMB 11800 / UQM 2034).